The following is a 116-amino-acid chain: Nucleoid-associated protein Tfu_0045 (116 aa).

It belongs to the YbaB/EbfC family. Homodimer.

It is found in the cytoplasm. It localises to the nucleoid. Binds to DNA and alters its conformation. May be involved in regulation of gene expression, nucleoid organization and DNA protection. This is Nucleoid-associated protein Tfu_0045 from Thermobifida fusca (strain YX).